The following is a 316-amino-acid chain: Polyprenyl transferase prhE (316 aa).

Helical transmembrane passes span 45 to 65, 69 to 89, 114 to 134, 135 to 155, 163 to 183, 188 to 208, 231 to 253, 257 to 276, and 296 to 316; these read VVGV…TFLL, VILS…NDLI, GAAL…LLLP, SQCA…PFGK, LILT…DMSP, IPTL…DIVY, ITDQ…GGIL, GFPF…LRFL, and SCLL…CVRL.

Belongs to the UbiA prenyltransferase family. Requires Mg(2+) as cofactor.

The protein localises to the membrane. The catalysed reaction is 3,5-dimethylorsellinate + (2E,6E)-farnesyl diphosphate = (3R)-3-farnesyl-6-hydroxy-2,3,5-trimethyl-4-oxocyclohexa-1,5-diene-1-carboxylate + diphosphate + H(+). Its pathway is secondary metabolite biosynthesis; terpenoid biosynthesis. In terms of biological role, polyprenyl transferase; part of the gene cluster that mediates the biosynthesis of paraherquonin, a meroterpenoid with a unique, highly congested hexacyclic molecular architecture. The first step of the pathway is the synthesis of 3,5-dimethylorsellinic acid (DMOA) by the polyketide synthase prhL. Synthesis of DMOA is followed by farnesylation by the prenyltransferase prhE, methylesterification by the methyl-transferase prhM, epoxidation of the prenyl chain by the flavin-dependent monooxygenase prhF, and cyclization of the farnesyl moiety by the terpene cyclase prhH, to yield the tetracyclic intermediate, protoaustinoid A. The short chain dehydrogenase prhI then oxidizes the C-3 alcohol group of the terpene cyclase product to transform protoaustinoid A into protoaustinoid B. The FAD-binding monooxygenase prhJ catalyzes the oxidation of protoaustinoid B into preaustinoid A which is further oxidized into preaustinoid A1 by FAD-binding monooxygenase phrK. Finally, prhA leads to berkeleydione via the berkeleyone B intermediate. PrhA is a multifunctional dioxygenase that first desaturates at C5-C6 to form berkeleyone B, followed by rearrangement of the A/B-ring to form the cycloheptadiene moiety in berkeleydione. Berkeleydione serves as the key intermediate for the biosynthesis of paraherquonin as well as many other meroterpenoids. The cytochrome P450 monooxygenases prhB, prhD, and prhN, as well as the isomerase prhC, are probably involved in the late stage of paraherquonin biosynthesis, after the production of berkeleydione. Especially prhC might be a multifunctional enzyme that catalyzes the D-ring expansion via intramolecular methoxy rearrangement, as well as the hydrolysis of the expanded D-ring. The sequence is that of Polyprenyl transferase prhE from Penicillium brasilianum.